The primary structure comprises 370 residues: DNA replication and repair protein RecF (370 aa).

30 to 37 (GENAQGKT) lines the ATP pocket.

It belongs to the RecF family.

The protein resides in the cytoplasm. The RecF protein is involved in DNA metabolism; it is required for DNA replication and normal SOS inducibility. RecF binds preferentially to single-stranded, linear DNA. It also seems to bind ATP. This is DNA replication and repair protein RecF from Bacillus velezensis (strain DSM 23117 / BGSC 10A6 / LMG 26770 / FZB42) (Bacillus amyloliquefaciens subsp. plantarum).